Consider the following 254-residue polypeptide: 3-deoxy-manno-octulosonate cytidylyltransferase (254 aa).

This sequence belongs to the KdsB family.

It is found in the cytoplasm. It carries out the reaction 3-deoxy-alpha-D-manno-oct-2-ulosonate + CTP = CMP-3-deoxy-beta-D-manno-octulosonate + diphosphate. It functions in the pathway nucleotide-sugar biosynthesis; CMP-3-deoxy-D-manno-octulosonate biosynthesis; CMP-3-deoxy-D-manno-octulosonate from 3-deoxy-D-manno-octulosonate and CTP: step 1/1. Its pathway is bacterial outer membrane biogenesis; lipopolysaccharide biosynthesis. Its function is as follows. Activates KDO (a required 8-carbon sugar) for incorporation into bacterial lipopolysaccharide in Gram-negative bacteria. The chain is 3-deoxy-manno-octulosonate cytidylyltransferase from Pseudomonas entomophila (strain L48).